We begin with the raw amino-acid sequence, 764 residues long: Myotubularin-related protein 10-B (764 aa).

The Myotubularin phosphatase domain occupies 208–649; the sequence is FESYSDWDRE…THIQIWKLCY (442 aa).

It belongs to the protein-tyrosine phosphatase family. Non-receptor class myotubularin subfamily.

This chain is Myotubularin-related protein 10-B (mtmr10-b), found in Xenopus laevis (African clawed frog).